Here is a 390-residue protein sequence, read N- to C-terminus: Protein shisa-9 (390 aa).

The signal sequence occupies residues 1 to 22; it reads MTGIRAIFYYFLVDLLTLLCWA. Topologically, residues 23–134 are extracellular; the sequence is QGKGGQHFGS…DPSHDPTRDK (112 aa). Residues N40 and N74 are each glycosylated (N-linked (GlcNAc...) asparagine). Residues 135-155 traverse the membrane as a helical segment; sequence TNLIVYIICGVVAVMVLVGIF. The Cytoplasmic segment spans residues 156–390; sequence TKLGLEKAHR…VTNSKTEVTV (235 aa).

The protein belongs to the shisa family. SHISA9 subfamily. In terms of assembly, component of some AMPA receptors (ionotropic glutamate receptors) complex.

The protein resides in the cell projection. Its subcellular location is the dendritic spine membrane. It is found in the synapse. In terms of biological role, regulator of short-term neuronal synaptic plasticity in the dentate gyrus. Associates with AMPA receptors (ionotropic glutamate receptors) in synaptic spines and promotes AMPA receptor desensitization at excitatory synapses. The sequence is that of Protein shisa-9 (shisa9) from Xenopus tropicalis (Western clawed frog).